An 826-amino-acid polypeptide reads, in one-letter code: U-box domain-containing protein 4 (826 aa).

The stretch at 172–204 (RSNQEILIEAVALERQKEMAEQSENNAEVEFLD) forms a coiled coil. Residues 229-303 (AILADFFCPL…ANWCETNDVK (75 aa)) form the U-box domain. The interval 330-501 (GADVSARKVS…TRRDLSDFSP (172 aa)) is disordered. A compositionally biased stretch (polar residues) spans 347-360 (ASSSETGKPSFSSR). The span at 391–414 (DARRGSLNDFEDRSNDSRELRTDA) shows a compositional bias: basic and acidic residues. Phosphoserine is present on Ser396. Low complexity predominate over residues 416–428 (GRSSVSSTTRGSV). Basic and acidic residues predominate over residues 492–501 (TRRDLSDFSP). ARM repeat units lie at residues 530 to 570 (NETR…LLAK), 573 to 612 (MDNR…NLSI), 614 to 653 (DNNK…SLSV), 655 to 694 (EENK…NLSI), 696 to 734 (QENK…NLAT), 736 to 775 (PEGR…QLST), and 778 to 817 (GRFC…YFRN).

It carries out the reaction S-ubiquitinyl-[E2 ubiquitin-conjugating enzyme]-L-cysteine + [acceptor protein]-L-lysine = [E2 ubiquitin-conjugating enzyme]-L-cysteine + N(6)-ubiquitinyl-[acceptor protein]-L-lysine.. It functions in the pathway protein modification; protein ubiquitination. Functionally, functions as an E3 ubiquitin ligase. The sequence is that of U-box domain-containing protein 4 (PUB4) from Arabidopsis thaliana (Mouse-ear cress).